The primary structure comprises 463 residues: MAQQQTGSRKRKAPAVEADAESSPSQGLAAADGEGPLLLKRQRRPATYRSMAHYLKVREVGGWGPARLQGFDGELRGYAVQRLPELLTERQLELGTVNKVFASQWLNSRQVVCGTKCNTLFVVDVESGHIARIPLLRDSEARLAQDQQGCGIHAIELNPSKTLLATGGENPNSLAIYQLPSLDPLCLGDRHGHKDWIFAVAWLSDTVAVSGSRDGTVALWRMDPDKFDDTVAWHSEVGLPVYAHIRPRDVEAIPRAIINPSNRKVRALACGGKNQELGAVSLDGYFHLWKAGSALSRLLSIRLPYFRDNVCLTYCDDMSVYAVGSHSHVSFLDLRQDQQNIRPLCSREGGTGVRSLSFYRHIITVGTGQGSLLFYDVRAQKFLEERASATLESSSGPARRKLRLACGRGWLNHNDFWVNYFGGMEVFPNALYTHCYNWPEMKLFVAGGPLPAGLHGNYAGLWS.

The tract at residues 1-35 is disordered; that stretch reads MAQQQTGSRKRKAPAVEADAESSPSQGLAAADGEG. WD repeat units lie at residues 87-137, 138-184, 185-252, 253-297, 298-341, and 342-376; these read LTER…PLLR, DSEA…SLDP, LCLG…DVEA, IPRA…ALSR, LLSI…QQNI, and RPLCSREGGTGVRSLSFYRHIITVGTGQGSLLFYD.

It belongs to the WD repeat DCAF12 family.

This is DDB1- and CUL4-associated factor 12-like protein 1 (DCAF12L1) from Homo sapiens (Human).